A 261-amino-acid chain; its full sequence is tRNA pseudouridine synthase A (261 aa).

The Nucleophile role is filled by Asp51. Tyr109 is a binding site for substrate.

Belongs to the tRNA pseudouridine synthase TruA family. In terms of assembly, homodimer.

It catalyses the reaction uridine(38/39/40) in tRNA = pseudouridine(38/39/40) in tRNA. Formation of pseudouridine at positions 38, 39 and 40 in the anticodon stem and loop of transfer RNAs. The chain is tRNA pseudouridine synthase A from Shewanella pealeana (strain ATCC 700345 / ANG-SQ1).